The primary structure comprises 173 residues: Dual-action ribosomal maturation protein DarP (173 aa).

This sequence belongs to the DarP family.

It is found in the cytoplasm. Functionally, member of a network of 50S ribosomal subunit biogenesis factors which assembles along the 30S-50S interface, preventing incorrect 23S rRNA structures from forming. Promotes peptidyl transferase center (PTC) maturation. The protein is Dual-action ribosomal maturation protein DarP of Pseudomonas putida (strain GB-1).